The sequence spans 419 residues: Putative zinc metalloprotease M6_Spy1682 (419 aa).

Residue H18 participates in Zn(2+) binding. E19 is a catalytic residue. H22 contributes to the Zn(2+) binding site. The next 4 helical transmembrane spans lie at 169–191, 301–323, 343–365, and 392–411; these read LITNFAGPMNNFILGIVVFILLV, LAWSGAFTILNALKGLITGFSLN, LESVLSLMAMLSINLGIFNLIPI, and AYITLAGVAIMVVLMIAVTW. The region spanning 175–274 is the PDZ domain; sequence GPMNNFILGI…LKTVAVKPQK (100 aa).

Belongs to the peptidase M50B family. Zn(2+) serves as cofactor.

The protein resides in the cell membrane. The polypeptide is Putative zinc metalloprotease M6_Spy1682 (Streptococcus pyogenes serotype M6 (strain ATCC BAA-946 / MGAS10394)).